The chain runs to 736 residues: MSADPPITPELVAAHGLKPDEYQRILTLIGREPSFTELGIFSAMWNEHCSYKSSRIHLRKLPTKAPWVIQGPGENAGVIDIGDGEACIFKMESHNHPSYIEPHQGAATGVGGILRDVFTMGARPVASLDLLRFGAPEHPLMRHLIAGVASGIGSYGNSFGVPTVGGSTKFDRRYNGNILVNAMAVGIARQDEIFYAKATGVGNPIVYLGSKTGRDGIHGATMASAAFEADAQEKRPTVQVGDPFAEKLLLEACLELMKTGAVIAIQDMGAAGLTSSAVEMGAKGNLGIELDLDAVPCREPGMSAYEMLLSESQERMLMVLAPEKAAEAEAVFRKWGLDFAIIGKTTDDLRFVIKHEGEIKADLPIKELGDEAPVYDRPSVLTPRPATIAADTIVPPISHGEALLRLIGSPDLASKLWITEQYDSLILGNTIQGPGGDAALIRLGDGPKGLALTADVTQRYCEADPYEGGKQAVTMAWRNLTAVGALPLAVTDNLNFGNPENPKIMGQFIGCLEGIGEACRALDFPIVSGNVSLYNASEGQDIPPTPAIGGVGLLEDASRGATLSIKRPGDAILLLGETQGWLGASLYLRDICGREDGAPPVVDLALEKRIGNFLRGLIANRALTAVHTLTDGGLAVGLAKMALAGGIGARIDIPGHCPAHAYLFGEDQARYLVTAAPEKAEAIRIEAEQLGIACQLIGRTGGPTLELGQEASVAIEDLRRAFEEWLPNHMTGIVIE.

Residue H48 is part of the active site. ATP is bound by residues Y51 and K90. E92 serves as a coordination point for Mg(2+). Substrate is bound by residues 93–96 and R115; that span reads SHNH. The active-site Proton acceptor is H94. Position 116 (D116) interacts with Mg(2+). Q239 lines the substrate pocket. Mg(2+) is bound at residue D267. 311-313 contacts substrate; the sequence is ESQ. 2 residues coordinate ATP: D492 and G529. N530 provides a ligand contact to Mg(2+). S532 contacts substrate.

It belongs to the FGAMS family. In terms of assembly, monomer. Part of the FGAM synthase complex composed of 1 PurL, 1 PurQ and 2 PurS subunits.

The protein resides in the cytoplasm. It carries out the reaction N(2)-formyl-N(1)-(5-phospho-beta-D-ribosyl)glycinamide + L-glutamine + ATP + H2O = 2-formamido-N(1)-(5-O-phospho-beta-D-ribosyl)acetamidine + L-glutamate + ADP + phosphate + H(+). It participates in purine metabolism; IMP biosynthesis via de novo pathway; 5-amino-1-(5-phospho-D-ribosyl)imidazole from N(2)-formyl-N(1)-(5-phospho-D-ribosyl)glycinamide: step 1/2. Part of the phosphoribosylformylglycinamidine synthase complex involved in the purines biosynthetic pathway. Catalyzes the ATP-dependent conversion of formylglycinamide ribonucleotide (FGAR) and glutamine to yield formylglycinamidine ribonucleotide (FGAM) and glutamate. The FGAM synthase complex is composed of three subunits. PurQ produces an ammonia molecule by converting glutamine to glutamate. PurL transfers the ammonia molecule to FGAR to form FGAM in an ATP-dependent manner. PurS interacts with PurQ and PurL and is thought to assist in the transfer of the ammonia molecule from PurQ to PurL. In Beijerinckia indica subsp. indica (strain ATCC 9039 / DSM 1715 / NCIMB 8712), this protein is Phosphoribosylformylglycinamidine synthase subunit PurL.